A 239-amino-acid polypeptide reads, in one-letter code: MSGGYAAERQLVADACRVAAARGLSDGFLGHVSLRIDEERLLIRCRGPQERGLAWTTAADVHLVDQGGAPGAPGELDGWSPPNELPLHVEVLRSRPEAASVVHVHPRAVVAADLAGLAIRPIVGAFDIPGAKLAAGGVPVYPRGVLVRNRGLALEMVAAMGKRPVVVLRGHGLTSSGGSVQEAVLRAISVDSLARLSLQIAAAGGAQADLPAEDLAALPDLGPGFNEGVAWRHEVARMG.

The active-site Proton donor/acceptor is Glu-84. Positions 84, 103, 105, and 171 each coordinate a divalent metal cation.

The protein belongs to the aldolase class II family. A divalent metal cation serves as cofactor.

It catalyses the reaction 3,4-dihydroxyphthalate + H(+) = 3,4-dihydroxybenzoate + CO2. It participates in xenobiotic degradation; phthalate degradation. In terms of biological role, catalyzes the decarboxylation of 3,4-dihydroxyphthalate to protocatechuate (3,4-dihydroxybenzoate) during phthalate metabolism. The protein is 3,4-dihydroxyphthalate decarboxylase of Terrabacter sp. (strain DBF63).